The primary structure comprises 1073 residues: ATP-dependent helicase/deoxyribonuclease subunit B (1073 aa).

Belongs to the helicase family. AddB/RexB type 2 subfamily. In terms of assembly, heterodimer of AddA and RexB. It depends on Mg(2+) as a cofactor.

Its function is as follows. The heterodimer acts as both an ATP-dependent DNA helicase and an ATP-dependent, dual-direction single-stranded exonuclease. Recognizes the chi site generating a DNA molecule suitable for the initiation of homologous recombination. This subunit has 5' -&gt; 3' nuclease activity but not helicase activity. This is ATP-dependent helicase/deoxyribonuclease subunit B from Streptococcus equi subsp. zooepidemicus (strain MGCS10565).